The primary structure comprises 769 residues: Serine/threonine-protein kinase PLK4 (769 aa).

Residues 14–267 (YEVQHLLGKG…LEAVLCHPFM (254 aa)) enclose the Protein kinase domain. ATP-binding positions include 20-28 (LGKGGFATV) and K43. D138 (proton acceptor) is an active-site residue. Positions 381 to 498 (EDRISVPPLN…ARFVGLVKSK (118 aa)) constitute a Cryptic POLO box 1 (CPB1) domain. A Cryptic POLO box 2 (CPB2) domain is found at 499-602 (TPKVTYFSTL…GRRPITDVQP (104 aa)). Residues 660 to 739 (PIKRINVPDI…IPNIQLKLKT (80 aa)) enclose the POLO box domain.

It belongs to the protein kinase superfamily. Ser/Thr protein kinase family. CDC5/Polo subfamily. As to quaternary structure, homodimer. Ubiquitinated by the SCF(Slimb) ubiquitin ligase complex; leading to its degradation by the proteasome during interphase and regulating centriole number and ensuring the block to centriole reduplication.

It localises to the cytoplasm. The protein resides in the cytoskeleton. The protein localises to the microtubule organizing center. It is found in the centrosome. Its subcellular location is the centriole. The catalysed reaction is L-seryl-[protein] + ATP = O-phospho-L-seryl-[protein] + ADP + H(+). It carries out the reaction L-threonyl-[protein] + ATP = O-phospho-L-threonyl-[protein] + ADP + H(+). Serine/threonine-protein kinase that plays a central role in centriole duplication. Able to trigger procentriole formation on the surface of the mother centriole cylinder, using mother centriole as a platform, leading to the recruitment of centriole biogenesis proteins such as sas-6. When overexpressed, it is able to induce centrosome amplification through the simultaneous generation of multiple procentrioles adjoining each parental centriole during S phase. Centrosome amplification following overexpression can initiate tumorigenesis, highlighting the importance of centrosome regulation in cancers. In Drosophila sechellia (Fruit fly), this protein is Serine/threonine-protein kinase PLK4 (SAK).